The primary structure comprises 441 residues: ATP-dependent protease ATPase subunit HslU (441 aa).

ATP is bound by residues isoleucine 17, 60-65 (GVGKTE), aspartate 253, glutamate 319, and arginine 391.

Belongs to the ClpX chaperone family. HslU subfamily. As to quaternary structure, a double ring-shaped homohexamer of HslV is capped on each side by a ring-shaped HslU homohexamer. The assembly of the HslU/HslV complex is dependent on binding of ATP.

The protein localises to the cytoplasm. ATPase subunit of a proteasome-like degradation complex; this subunit has chaperone activity. The binding of ATP and its subsequent hydrolysis by HslU are essential for unfolding of protein substrates subsequently hydrolyzed by HslV. HslU recognizes the N-terminal part of its protein substrates and unfolds these before they are guided to HslV for hydrolysis. In Legionella pneumophila (strain Paris), this protein is ATP-dependent protease ATPase subunit HslU.